Here is a 346-residue protein sequence, read N- to C-terminus: Quinolinate synthase (346 aa).

Residues His47 and Ser68 each contribute to the iminosuccinate site. Residue Cys113 coordinates [4Fe-4S] cluster. Iminosuccinate-binding positions include 139 to 141 (YAN) and Ser156. A [4Fe-4S] cluster-binding site is contributed by Cys200. Residues 226 to 228 (HPE) and Thr243 each bind iminosuccinate. Cys297 is a [4Fe-4S] cluster binding site.

It belongs to the quinolinate synthase family. Type 1 subfamily. The cofactor is [4Fe-4S] cluster.

The protein resides in the cytoplasm. It carries out the reaction iminosuccinate + dihydroxyacetone phosphate = quinolinate + phosphate + 2 H2O + H(+). It functions in the pathway cofactor biosynthesis; NAD(+) biosynthesis; quinolinate from iminoaspartate: step 1/1. Catalyzes the condensation of iminoaspartate with dihydroxyacetone phosphate to form quinolinate. This Photorhabdus laumondii subsp. laumondii (strain DSM 15139 / CIP 105565 / TT01) (Photorhabdus luminescens subsp. laumondii) protein is Quinolinate synthase.